Here is a 527-residue protein sequence, read N- to C-terminus: Protein IQ-DOMAIN 4 (527 aa).

The tract at residues 13–90 is disordered; it reads CLSPGKDKKN…PPSPPPPPPA (78 aa). Basic and acidic residues predominate over residues 17-26; that stretch reads GKDKKNQKPE. Over residues 63–90 the composition is skewed to pro residues; the sequence is PYPPPPPLPDFAPQPLLPPPSPPPPPPA. One can recognise an IQ domain in the interval 147 to 175; that stretch reads EETAAIKIQNAYRCYTARRTLRALRGMAR. Residues 256 to 273 form a calmodulin-binding region; it reads RSVNRKEASVRRERALAY. A disordered region spans residues 323 to 527; it reads VSVKSSLKRE…EKKRRNGGSS (205 aa). Positions 335-360 are enriched in polar residues; the sequence is IKSSPARSKTQKSASQSSIQWPVNND. The span at 361–370 shows a compositional bias: basic and acidic residues; sequence TKSRKIEVTN. Composition is skewed to polar residues over residues 399–422 and 437–455; these read LDNT…NAQT and NTKT…NLAN. A compositionally biased stretch (basic and acidic residues) spans 471–481; that stretch reads PKKEVVADKKK. The Nuclear localization signal motif lies at 478–485; sequence DKKKPPQM.

Belongs to the IQD family. In terms of assembly, binds to multiple calmodulin (CaM) in the presence of Ca(2+) and CaM-like proteins.

The protein localises to the nucleus. It is found in the nucleolus. Its function is as follows. May be involved in cooperative interactions with calmodulins or calmodulin-like proteins. Recruits calmodulin proteins to microtubules, thus being a potential scaffold in cellular signaling and trafficking. May associate with nucleic acids and regulate gene expression at the transcriptional or post-transcriptional level. In Arabidopsis thaliana (Mouse-ear cress), this protein is Protein IQ-DOMAIN 4.